A 2339-amino-acid polypeptide reads, in one-letter code: Inverse autotransporter adhesin YeeJ (2339 aa).

An N-terminal signal peptide occupies residues 1–26 (MGIKLRRLTAGICLITQLAFPMAAAA). One can recognise a LysM domain in the interval 50–98 (VPYTLGALESAQSVAERFGISVAELRKLNQFRTFARGFDNVRQGDELDV). The interval 125 to 400 (TSQQIGSLLA…SRYDLVDRNN (276 aa)) is inverse autotransporter. Residues 513-605 (QKDSSVSLST…GVDAAKAPAV (93 aa)) are invasin 3 domain. 13 Big-1 domains span residues 721-815 (IATL…VSFV), 822-913 (QVDL…VNFI), 920-1017 (ALTL…MTFV), 1024-1121 (VVVL…VTFV), 1128-1221 (QVVL…VHFI), 1229-1331 (IIEL…SINV), 1339-1432 (HLTL…VTYV), 1439-1535 (EITL…VNFI), 1542-1639 (QVNL…VTLI), 1646-1730 (KLAS…PTEV), 1746-1837 (ITSL…LEAI), 1840-1934 (KLTL…VKVT), and 1942-2034 (VASF…ITLV). A C-type lectin domain region spans residues 2236-2339 (KSWWVNAGEA…FAYATCYKNL (104 aa)).

It belongs to the intimin/invasin family.

Its subcellular location is the cell outer membrane. A cryptic inverse autotransporter, it is not expressed in wild-type strain MG1655. Upon overexpression shows increased adherence to polyvinyl chloride (PVC) plates and increased mature biofilm formation. Probably binds peptidoglycan. The chain is Inverse autotransporter adhesin YeeJ (yeeJ) from Escherichia coli (strain K12).